Reading from the N-terminus, the 228-residue chain is Flagellar L-ring protein (228 aa).

A signal peptide spans 1–17; it reads MHYLRYFAIAFLLLLSS. The N-palmitoyl cysteine moiety is linked to residue Cys-18. Residue Cys-18 is the site of S-diacylglycerol cysteine attachment.

The protein belongs to the FlgH family. As to quaternary structure, the basal body constitutes a major portion of the flagellar organelle and consists of four rings (L,P,S, and M) mounted on a central rod.

The protein resides in the cell membrane. It is found in the bacterial flagellum basal body. In terms of biological role, assembles around the rod to form the L-ring and probably protects the motor/basal body from shearing forces during rotation. This Wigglesworthia glossinidia brevipalpis protein is Flagellar L-ring protein.